A 433-amino-acid chain; its full sequence is Adenosylhomocysteinase B (433 aa).

5 residues coordinate substrate: T57, D132, E157, K187, and D191. The NAD binding stretch occupies residues 184 to 351 (SVTKSKFDNL…EGRLVNLGCA (168 aa)).

Belongs to the adenosylhomocysteinase family. As to quaternary structure, homotetramer. It depends on NAD(+) as a cofactor.

Its subcellular location is the cytoplasm. The catalysed reaction is S-adenosyl-L-homocysteine + H2O = L-homocysteine + adenosine. The protein operates within amino-acid biosynthesis; L-homocysteine biosynthesis; L-homocysteine from S-adenosyl-L-homocysteine: step 1/1. Catalyzes the hydrolysis of S-adenosyl-L-homocysteine to form adenosine and homocysteine. Binds copper ions. The sequence is that of Adenosylhomocysteinase B (ahcy-b) from Xenopus laevis (African clawed frog).